The sequence spans 597 residues: Gamma-terpinene synthase, chloroplastic (597 aa).

The N-terminal 47 residues, 1–47 (MATLSMQVSILSKQVKNLNSFGMRASKLPMVARRVDVSTTRLRPICS), are a transit peptide targeting the chloroplast. Mn(2+) contacts are provided by aspartate 350 and aspartate 354. The DDXXD motif motif lies at 350–354 (DDVYD). Homodimerization regions lie at residues 356-362 (YGTLDEL) and 428-465 (EAKW…FTLP). Residues aspartate 494 and glutamate 502 each coordinate Mn(2+).

Belongs to the terpene synthase family. As to quaternary structure, homodimer. Mn(2+) serves as cofactor. It depends on Mg(2+) as a cofactor.

Its subcellular location is the plastid. It localises to the chloroplast. The enzyme catalyses (2E)-geranyl diphosphate = gamma-terpinene + diphosphate. Its pathway is secondary metabolite biosynthesis; terpenoid biosynthesis. Its function is as follows. Involved in the biosynthesis of phenolic monoterpenes natural products thymol and carvacrol which have a broad range of biological activities acting as antimicrobial compounds, insecticides, antioxidants and pharmaceutical agents. Monoterpene synthase which catalyzes the conversion of geranyl diphosphate (GPP) to gamma-terpinene and minor amounts of other monoterpenes (e.g. alpha-thujene, alpha-terpinene, myrcene, sabinene, (+)-R-limonene, alpha-pinene and alpha-phellandrene). The chain is Gamma-terpinene synthase, chloroplastic from Thymus caespititius (Cretan thyme).